The following is a 101-amino-acid chain: Small ribosomal subunit protein uS10 (101 aa).

This sequence belongs to the universal ribosomal protein uS10 family. As to quaternary structure, part of the 30S ribosomal subunit.

Its function is as follows. Involved in the binding of tRNA to the ribosomes. In Anaeromyxobacter dehalogenans (strain 2CP-C), this protein is Small ribosomal subunit protein uS10.